Here is a 356-residue protein sequence, read N- to C-terminus: Protein-glutamate methylesterase/protein-glutamine glutaminase 2 (356 aa).

The Response regulatory domain maps to 6-123 (KVLIVDDSAL…KQFLEESSIR (118 aa)). D57 carries the post-translational modification 4-aspartylphosphate. Residues 165-356 (VQRTEKVVVV…AAAIVKACNS (192 aa)) form the CheB-type methylesterase domain. Residues S177, H203, and D299 contribute to the active site.

Belongs to the CheB family. Phosphorylated by CheA. Phosphorylation of the N-terminal regulatory domain activates the methylesterase activity.

The protein localises to the cytoplasm. It carries out the reaction [protein]-L-glutamate 5-O-methyl ester + H2O = L-glutamyl-[protein] + methanol + H(+). The enzyme catalyses L-glutaminyl-[protein] + H2O = L-glutamyl-[protein] + NH4(+). Involved in chemotaxis. Part of a chemotaxis signal transduction system that modulates chemotaxis in response to various stimuli. Catalyzes the demethylation of specific methylglutamate residues introduced into the chemoreceptors (methyl-accepting chemotaxis proteins or MCP) by CheR. Also mediates the irreversible deamidation of specific glutamine residues to glutamic acid. This chain is Protein-glutamate methylesterase/protein-glutamine glutaminase 2, found in Oleidesulfovibrio alaskensis (strain ATCC BAA-1058 / DSM 17464 / G20) (Desulfovibrio alaskensis).